We begin with the raw amino-acid sequence, 194 residues long: Orotate phosphoribosyltransferase (194 aa).

Residues Lys98 and 122 to 130 each bind 5-phospho-alpha-D-ribose 1-diphosphate; that span reads EDVLTTGGS. 2 residues coordinate orotate: Thr126 and Arg154.

It belongs to the purine/pyrimidine phosphoribosyltransferase family. PyrE subfamily. As to quaternary structure, homodimer. Requires Mg(2+) as cofactor.

The enzyme catalyses orotidine 5'-phosphate + diphosphate = orotate + 5-phospho-alpha-D-ribose 1-diphosphate. The protein operates within pyrimidine metabolism; UMP biosynthesis via de novo pathway; UMP from orotate: step 1/2. Functionally, catalyzes the transfer of a ribosyl phosphate group from 5-phosphoribose 1-diphosphate to orotate, leading to the formation of orotidine monophosphate (OMP). In Deinococcus radiodurans (strain ATCC 13939 / DSM 20539 / JCM 16871 / CCUG 27074 / LMG 4051 / NBRC 15346 / NCIMB 9279 / VKM B-1422 / R1), this protein is Orotate phosphoribosyltransferase.